The sequence spans 1606 residues: Fatty acid synthase apf5 (1606 aa).

The 77-residue stretch at 142–218 (VPVSAILISL…ETLSTSHDGQ (77 aa)) folds into the Carrier domain. O-(pantetheine 4'-phosphoryl)serine is present on Ser-177. The region spanning 996 to 1539 (KESLIEVALQ…QKGGQALLVH (544 aa)) is the Ketosynthase family 3 (KS3) domain. Catalysis depends on for beta-ketoacyl synthase activity residues Cys-1182, His-1424, and His-1465.

It belongs to the thiolase-like superfamily. Fungal fatty acid synthetase subunit alpha family.

The enzyme catalyses a fatty acyl-[ACP] + malonyl-[ACP] + H(+) = a 3-oxoacyl-[ACP] + holo-[ACP] + CO2. Its pathway is secondary metabolite biosynthesis. Its function is as follows. Fatty acid synthase; part of the gene cluster that mediates the biosynthesis of the cyclic tetrapeptide apicidin F (APF). The non-ribosomal peptide synthetase apf1 incorporates four different amino acids to produce apicidin F: L-phenylalanine, D-pipecolic acid (D-pip), N-methoxy-L-tryptophan and L-2-aminooctanedioic acid. L-Phenylalanine is the only proteinogenic amino acid directly used by apf1. The 3 other apf1 substrates are non-proteinogenic and have to be modified by other enzymes of the cluster. Lysine is converted to delta-1-pyrroline-5-carboxylate (P5C) which is reduced to L-pipecolic acid (L-pip) by apf3. L-pip is epimerized to D-pip, probably by apf1 activity, prior to incorporation. L-Tryptophan is N-oxidyzed by one of the cytochrome P450 monooxygenases (apf7 or apf8), and further methylated at the hydroxy group by the O-methyltransferase apf6 to yield N-methoxy-L-tryptophan. The synthesis of the fourth apf1 substrate is more complex. The fatty acid synthase apf5 is involved in the synthesis of the octanoic acid backbone of L-2-aminooctanedioic acid by fixing one acetyl-CoA unit and three malonyl-CoA units. Then one of the cytochrome P450 monooxygenases (apf7 or apf8) may oxidize this backbone to 2-oxooctanoic acid. The aminotransferase apf4 is predicted to catalyze the exchange of the keto group with an amino group. The next step would be the oxidation of 2-aminooctanoic acid by one of the cytochrome P450 monooxygenases (apf7 or apf8). The last step is the oxidation of 2-amino-8-hydroxyoctanoic acid to 2-aminooctanedioic acid is catalyzed by the FAD-dependent monooxygenase apf9. This is Fatty acid synthase apf5 from Gibberella fujikuroi (strain CBS 195.34 / IMI 58289 / NRRL A-6831) (Bakanae and foot rot disease fungus).